The sequence spans 441 residues: UDP-N-acetylmuramoylalanine--D-glutamate ligase (441 aa).

112 to 118 (GTNGKTT) is an ATP binding site.

The protein belongs to the MurCDEF family.

Its subcellular location is the cytoplasm. The enzyme catalyses UDP-N-acetyl-alpha-D-muramoyl-L-alanine + D-glutamate + ATP = UDP-N-acetyl-alpha-D-muramoyl-L-alanyl-D-glutamate + ADP + phosphate + H(+). It participates in cell wall biogenesis; peptidoglycan biosynthesis. In terms of biological role, cell wall formation. Catalyzes the addition of glutamate to the nucleotide precursor UDP-N-acetylmuramoyl-L-alanine (UMA). This chain is UDP-N-acetylmuramoylalanine--D-glutamate ligase, found in Gloeobacter violaceus (strain ATCC 29082 / PCC 7421).